The chain runs to 53 residues: Large ribosomal subunit protein bL32 (53 aa).

Basic residues predominate over residues M1–Y20. The tract at residues M1–A53 is disordered. Residues N42–A53 show a composition bias toward polar residues.

Belongs to the bacterial ribosomal protein bL32 family.

The sequence is that of Large ribosomal subunit protein bL32 from Sulfurovum sp. (strain NBC37-1).